We begin with the raw amino-acid sequence, 72 residues long: SPbeta prophage-derived uncharacterized protein YoqN (72 aa).

The chain is SPbeta prophage-derived uncharacterized protein YoqN (yoqN) from Bacillus subtilis (strain 168).